Consider the following 117-residue polypeptide: Large ribosomal subunit protein bL20c (117 aa).

Belongs to the bacterial ribosomal protein bL20 family.

The protein resides in the plastid. It localises to the chloroplast. Binds directly to 23S ribosomal RNA and is necessary for the in vitro assembly process of the 50S ribosomal subunit. It is not involved in the protein synthesizing functions of that subunit. In Lemna minor (Common duckweed), this protein is Large ribosomal subunit protein bL20c.